Consider the following 40-residue polypeptide: SVELDSDGEPIRNGGGLYYILPVVQGKGGGLEFAKTGSQS.

In terms of assembly, monomer.

The catalysed reaction is Preferential cleavage: Arg-|-Xaa, Lys-|-Xaa.. In terms of biological role, inhibits trypsin but not chymotrypsin, papain or porcine pancreatic alpha-amylase. Has insecticidal activity against A.aegypti. Functions by inhibiting the A.aegypti midgut proteases to reduce the survival of larva and adults. The protein is Trypsin inhibitor of Cassia leiandra (Marimari).